Reading from the N-terminus, the 123-residue chain is Small ribosomal subunit protein uS12cz/uS12cy (123 aa).

Belongs to the universal ribosomal protein uS12 family. In terms of assembly, part of the 30S ribosomal subunit.

Its subcellular location is the plastid. The protein localises to the chloroplast. In terms of biological role, with S4 and S5 plays an important role in translational accuracy. Located at the interface of the 30S and 50S subunits. The polypeptide is Small ribosomal subunit protein uS12cz/uS12cy (rps12-A) (Nandina domestica (Heavenly bamboo)).